The chain runs to 283 residues: Nucleotide-binding protein Sama_3091 (283 aa).

8 to 15 (GRSGSGKS) contacts ATP. Residue 56–59 (DIRN) coordinates GTP.

It belongs to the RapZ-like family.

Its function is as follows. Displays ATPase and GTPase activities. The chain is Nucleotide-binding protein Sama_3091 from Shewanella amazonensis (strain ATCC BAA-1098 / SB2B).